We begin with the raw amino-acid sequence, 502 residues long: Lysine--tRNA ligase (502 aa).

Mg(2+) contacts are provided by Glu411 and Glu418.

Belongs to the class-II aminoacyl-tRNA synthetase family. In terms of assembly, homodimer. Mg(2+) is required as a cofactor.

It is found in the cytoplasm. It carries out the reaction tRNA(Lys) + L-lysine + ATP = L-lysyl-tRNA(Lys) + AMP + diphosphate. This is Lysine--tRNA ligase from Clostridium tetani (strain Massachusetts / E88).